The sequence spans 231 residues: ATP-dependent dethiobiotin synthetase BioD 2 (231 aa).

13 to 18 (SVGKTV) lines the ATP pocket. T17 lines the Mg(2+) pocket. Residue K38 is part of the active site. ATP is bound by residues D55, 112–115 (EGTG), 172–173 (NR), 201–203 (PYL), and Q208. 2 residues coordinate Mg(2+): D55 and E112.

Belongs to the dethiobiotin synthetase family. In terms of assembly, homodimer. Mg(2+) serves as cofactor.

It localises to the cytoplasm. The enzyme catalyses (7R,8S)-7,8-diammoniononanoate + CO2 + ATP = (4R,5S)-dethiobiotin + ADP + phosphate + 3 H(+). It participates in cofactor biosynthesis; biotin biosynthesis; biotin from 7,8-diaminononanoate: step 1/2. Catalyzes a mechanistically unusual reaction, the ATP-dependent insertion of CO2 between the N7 and N8 nitrogen atoms of 7,8-diaminopelargonic acid (DAPA, also called 7,8-diammoniononanoate) to form a ureido ring. The chain is ATP-dependent dethiobiotin synthetase BioD 2 from Salmonella typhi.